The sequence spans 619 residues: Dihydroxy-acid dehydratase (619 aa).

Mg(2+) is bound at residue Asp80. A [2Fe-2S] cluster-binding site is contributed by Cys121. Residues Asp122 and Lys123 each coordinate Mg(2+). Lys123 is subject to N6-carboxylysine. Cys196 is a [2Fe-2S] cluster binding site. Mg(2+) is bound at residue Glu492. Ser518 functions as the Proton acceptor in the catalytic mechanism.

The protein belongs to the IlvD/Edd family. As to quaternary structure, homodimer. The cofactor is [2Fe-2S] cluster. It depends on Mg(2+) as a cofactor.

It catalyses the reaction (2R)-2,3-dihydroxy-3-methylbutanoate = 3-methyl-2-oxobutanoate + H2O. The catalysed reaction is (2R,3R)-2,3-dihydroxy-3-methylpentanoate = (S)-3-methyl-2-oxopentanoate + H2O. The protein operates within amino-acid biosynthesis; L-isoleucine biosynthesis; L-isoleucine from 2-oxobutanoate: step 3/4. It participates in amino-acid biosynthesis; L-valine biosynthesis; L-valine from pyruvate: step 3/4. In terms of biological role, functions in the biosynthesis of branched-chain amino acids. Catalyzes the dehydration of (2R,3R)-2,3-dihydroxy-3-methylpentanoate (2,3-dihydroxy-3-methylvalerate) into 2-oxo-3-methylpentanoate (2-oxo-3-methylvalerate) and of (2R)-2,3-dihydroxy-3-methylbutanoate (2,3-dihydroxyisovalerate) into 2-oxo-3-methylbutanoate (2-oxoisovalerate), the penultimate precursor to L-isoleucine and L-valine, respectively. The polypeptide is Dihydroxy-acid dehydratase (Bifidobacterium adolescentis (strain ATCC 15703 / DSM 20083 / NCTC 11814 / E194a)).